Here is a 125-residue protein sequence, read N- to C-terminus: UPF0225 protein Cgl1438/cg1626 (125 aa).

Belongs to the UPF0225 family.

This is UPF0225 protein Cgl1438/cg1626 from Corynebacterium glutamicum (strain ATCC 13032 / DSM 20300 / JCM 1318 / BCRC 11384 / CCUG 27702 / LMG 3730 / NBRC 12168 / NCIMB 10025 / NRRL B-2784 / 534).